The following is a 341-amino-acid chain: Paired box protein Pax-9 (341 aa).

A DNA-binding region (paired) is located at residues 4–130; the sequence is AFGEVNQLGG…SSISRILRNK (127 aa). The PAI subdomain stretch occupies residues 7–63; that stretch reads EVNQLGGVFVNGRPLPNAIRLRIVELAQLGIRPCDISRQLRVSHGCVSKILARYNET. Residues 82–130 form an RED subdomain region; it reads TVVKHIRTYKQRDPGIFAWEIRDRLLADGVCDKYNVPSVSSISRILRNK. The interval 168 to 189 is interaction with KDM5B; sequence AAAAKVPTPPGVPAIPGSVAMP.

In terms of assembly, interacts with KDM5B.

Its subcellular location is the nucleus. In terms of biological role, transcription factor required for normal development of thymus, parathyroid glands, ultimobranchial bodies, teeth, skeletal elements of skull and larynx as well as distal limbs. The sequence is that of Paired box protein Pax-9 (PAX9) from Homo sapiens (Human).